The following is a 52-amino-acid chain: Insulin (52 aa).

3 cysteine pairs are disulfide-bonded: C7–C38, C19–C51, and C37–C42.

This sequence belongs to the insulin family. Heterodimer of a B chain and an A chain linked by two disulfide bonds.

It localises to the secreted. In terms of biological role, insulin decreases blood glucose concentration. It increases cell permeability to monosaccharides, amino acids and fatty acids. It accelerates glycolysis, the pentose phosphate cycle, and glycogen synthesis in liver. The polypeptide is Insulin (ins) (Acipenser gueldenstaedtii (Russian sturgeon)).